Consider the following 152-residue polypeptide: VQ motif-containing protein 8, chloroplastic (152 aa).

The disordered stretch occupies residues 1–42 (MIPTRCNEINGSRPSSLKLAGESHTIKKTSSCKSKPRPHGRA). The N-terminal 58 residues, 1 to 58 (MIPTRCNEINGSRPSSLKLAGESHTIKKTSSCKSKPRPHGRASPVIIYAHSPKVIHTR), are a transit peptide targeting the chloroplast. The VQ motif lies at 62-71 (FMALVQRLTG). The interval 80–108 (TSESSSSVVTEEVNVGDDNTAAPFSQDRT) is disordered. Over residues 81-92 (SESSSSVVTEEV) the composition is skewed to low complexity.

It is found in the plastid. Its subcellular location is the chloroplast. Its function is as follows. May be involved in chloroplast development. This chain is VQ motif-containing protein 8, chloroplastic, found in Arabidopsis thaliana (Mouse-ear cress).